The chain runs to 441 residues: Mitochondrial inner membrane protein OXA1L (441 aa).

At 1-113 (MALALMCGRR…QAAAEQSFAE (113 aa)) the chain is on the mitochondrial intermembrane side. Residues 114–134 (LGLGSYTPVGLIQNLLEFMHV) form a helical membrane-spanning segment. Residues 135-139 (NLGLP) are Mitochondrial matrix-facing. The chain crosses the membrane as a helical span at residues 140 to 160 (WWGAIAACTVLARCLVFPLIV). Over 161–212 (KGQREAAKIHNHLPEIQKFSARIREAKLTGNHTEFYRASSEMTFYQKKHDIK) the chain is Mitochondrial intermembrane. The chain crosses the membrane as a helical span at residues 213-233 (LFRPLILPLTQAPIFISFFIA). At 234–260 (LREMANLPVPSLQTGGLWWFQDLTLSD) the chain is on the mitochondrial matrix side. A helical transmembrane segment spans residues 261–281 (PIYVLPLVVTATMWGVLELGA). At 282 to 298 (ETGMQSSDLQWMRNFIR) the chain is on the mitochondrial intermembrane side. A helical membrane pass occupies residues 299 to 319 (LMPLAVLPITIHFPTAVFMYW). The Mitochondrial matrix segment spans residues 320 to 441 (LSSNMFSLGQ…SKQPWRDTLG (122 aa)). Ser-364 is subject to Phosphoserine. Thr-400 is modified (phosphothreonine). Residues 405-441 (PLLQHGKNDPPNTPNSSSSSSSSNKAKSKQPWRDTLG) form a disordered region. Residues 418-429 (PNSSSSSSSSNK) show a composition bias toward low complexity.

This sequence belongs to the OXA1/ALB3/YidC family. As to quaternary structure, monomer; predominantly monomeric at low salt concentrations. Homooligomer; predominantly homooligomeric at high salt concentrations. Associates with the mitochondrial ribosome. Associates preferentially as a dimer with the large ribosomal subunit 39S of the mitochondrial ribosome. Interacts with OXA1L; promoting cotranslational quality control in mitochondria.

It is found in the mitochondrion inner membrane. Functionally, mitochondrial membrane insertase that mediates the cotranslational insertion of integral membrane proteins into the mitochondrial inner membrane. Essential for the activity and assembly of cytochrome oxidase. Required for the correct biogenesis of ATP synthase and complex I in mitochondria. The polypeptide is Mitochondrial inner membrane protein OXA1L (OXA1L) (Bos taurus (Bovine)).